The sequence spans 498 residues: Acetylcholine receptor subunit alpha-type acr-16 (498 aa).

The first 19 residues, 1 to 19, serve as a signal peptide directing secretion; it reads MSVCTLLISCAILAAPTLG. Over 20–230 the chain is Extracellular; the sequence is SLQERRLYED…FYLHMRRRTL (211 aa). Asparagine 43 and asparagine 93 each carry an N-linked (GlcNAc...) asparagine glycan. 2 disulfides stabilise this stretch: cysteine 147-cysteine 161 and cysteine 211-cysteine 212. 3 consecutive transmembrane segments (helical) span residues 231-252, 261-279, and 295-314; these read YYGF…LGFT, ITLQ…SIVS, and FFTC…VYVL. At 315–472 the chain is on the cytoplasmic side; that stretch reads NLHYRTPETH…WKFAAMVVDR (158 aa). The chain crosses the membrane as a helical span at residues 473-493; it reads LCLYVFTIFIIVSTIGIFWSA.

The protein belongs to the ligand-gated ion channel (TC 1.A.9) family. Acetylcholine receptor (TC 1.A.9.1) subfamily. In terms of tissue distribution, expressed in the body wall muscle.

Its subcellular location is the postsynaptic cell membrane. The protein localises to the cell membrane. In terms of biological role, after binding acetylcholine, the AChR responds by an extensive change in conformation that affects all subunits and leads to opening of an ion-conducting channel across the plasma membrane. A subunit of the levamisole-insensitive nicotinic receptor. In Caenorhabditis elegans, this protein is Acetylcholine receptor subunit alpha-type acr-16 (acr-16).